A 791-amino-acid polypeptide reads, in one-letter code: Disintegrin and metalloproteinase domain-containing protein 1a (791 aa).

A signal peptide spans 1 to 65 (MSVAAAGRGF…LLIFLPSTFC (65 aa)). Asn-72 carries an N-linked (GlcNAc...) asparagine glycan. The tract at residues 201 to 220 (CSVTPKDSPGDTSHPPRSRK) is disordered. A Peptidase M12B domain is found at 235–429 (KYVEMFVVVN…HRGACLLDEP (195 aa)). N-linked (GlcNAc...) asparagine glycosylation occurs at Asn-256. Intrachain disulfides connect Cys-345–Cys-424, Cys-385–Cys-408, and Cys-387–Cys-393. A Zn(2+)-binding site is contributed by His-370. Glu-371 is a catalytic residue. 2 residues coordinate Zn(2+): His-374 and His-380. 2 N-linked (GlcNAc...) asparagine glycosylation sites follow: Asn-407 and Asn-484. Residues 438–522 (AANCGNGVVE…ECPANSYMQD (85 aa)) form the Disintegrin domain. Cysteines 494 and 514 form a disulfide. The N-linked (GlcNAc...) asparagine glycan is linked to Asn-630. The EGF-like domain maps to 663–697 (LQYNCEPQEMCHGNGVCNNFKHCHCDAGFAPPDCS). 3 disulfides stabilise this stretch: Cys-667/Cys-679, Cys-673/Cys-685, and Cys-687/Cys-696. Residues 741-761 (VMVLVVPIFLVVLLCCLMLIA) form a helical membrane-spanning segment. At 762-791 (YLWSEVQEVVSPPSSSESSSSSSWSDSDSQ) the chain is on the cytoplasmic side. The interval 772-791 (SPPSSSESSSSSSWSDSDSQ) is disordered.

In terms of assembly, heterodimer with ADAM2/fertilin subunit beta. Testis.

It localises to the membrane. Its function is as follows. May be involved in sperm-egg fusion. In Mus musculus (Mouse), this protein is Disintegrin and metalloproteinase domain-containing protein 1a (Adam1a).